A 265-amino-acid chain; its full sequence is Gamma-secretase subunit APH-1A (265 aa).

Residues 1–2 lie on the Lumenal side of the membrane; sequence MG. The chain crosses the membrane as a helical span at residues 3-23; it reads AAVFFGCTFVAFGPAFSLFLI. The Cytoplasmic portion of the chain corresponds to 24–31; that stretch reads TVAGDPLR. A helical membrane pass occupies residues 32–52; that stretch reads VIILVAGAFFWLVSLLLASVV. Residues 53–68 lie on the Lumenal side of the membrane; that stretch reads WFILVHVTDRSDARLQ. The chain crosses the membrane as a helical span at residues 69-89; the sequence is YGLLIFGAAVSVLLQEVFRFA. Residues 90–118 lie on the Cytoplasmic side of the membrane; sequence YYKLLKKADEGLASLSEDGRSPISIRQMA. The helical transmembrane segment at 119–139 threads the bilayer; it reads YVSGLSFGIISGVFSVINILA. Over 140–158 the chain is Lumenal; sequence DALGPGVVGIHGDSPYYFL. Residues 159–179 form a helical membrane-spanning segment; that stretch reads TSAFLTAAIILLHTFWGVVFF. Topologically, residues 180 to 186 are cytoplasmic; the sequence is DACERRR. A helical membrane pass occupies residues 187-207; that stretch reads YWALGLVVGSHLLTSGLTFLN. Residues 208–213 are Lumenal-facing; it reads PWYEAS. The chain crosses the membrane as a helical span at residues 214 to 234; the sequence is LLPIYAVTVSMGLWAFITAGG. Topologically, residues 235–265 are cytoplasmic; sequence SLRSIQRSLSCRRQEDSRVMVYSALRIPPED.

It belongs to the APH-1 family. In terms of assembly, the functional gamma-secretase complex is composed of at least four polypeptides: a presenilin homodimer (PSEN1 or PSEN2), nicastrin (NCSTN), APH1 (APH1A or APH1B) and PSENEN/PEN2.

The protein localises to the endoplasmic reticulum membrane. Its subcellular location is the golgi apparatus. It is found in the golgi stack membrane. Non-catalytic subunit of the gamma-secretase complex, an endoprotease complex that catalyzes the intramembrane cleavage of integral membrane proteins such as Notch receptors and APP (amyloid-beta precursor protein). Required for normal gamma-secretase assembly. The gamma-secretase complex plays a role in Notch and Wnt signaling cascades and regulation of downstream processes via its role in processing key regulatory proteins, and by regulating cytosolic CTNNB1 levels. The polypeptide is Gamma-secretase subunit APH-1A (Aph1a) (Mus musculus (Mouse)).